The primary structure comprises 282 residues: Phosphatidylserine decarboxylase proenzyme (282 aa).

Catalysis depends on charge relay system; for autoendoproteolytic cleavage activity residues Asp88, His144, and Ser247. Residue Ser247 is the Schiff-base intermediate with substrate; via pyruvic acid; for decarboxylase activity of the active site. Residue Ser247 is modified to Pyruvic acid (Ser); by autocatalysis.

This sequence belongs to the phosphatidylserine decarboxylase family. PSD-B subfamily. Prokaryotic type I sub-subfamily. In terms of assembly, heterodimer of a large membrane-associated beta subunit and a small pyruvoyl-containing alpha subunit. Pyruvate is required as a cofactor. In terms of processing, is synthesized initially as an inactive proenzyme. Formation of the active enzyme involves a self-maturation process in which the active site pyruvoyl group is generated from an internal serine residue via an autocatalytic post-translational modification. Two non-identical subunits are generated from the proenzyme in this reaction, and the pyruvate is formed at the N-terminus of the alpha chain, which is derived from the carboxyl end of the proenzyme. The autoendoproteolytic cleavage occurs by a canonical serine protease mechanism, in which the side chain hydroxyl group of the serine supplies its oxygen atom to form the C-terminus of the beta chain, while the remainder of the serine residue undergoes an oxidative deamination to produce ammonia and the pyruvoyl prosthetic group on the alpha chain. During this reaction, the Ser that is part of the protease active site of the proenzyme becomes the pyruvoyl prosthetic group, which constitutes an essential element of the active site of the mature decarboxylase.

The protein localises to the cell membrane. It catalyses the reaction a 1,2-diacyl-sn-glycero-3-phospho-L-serine + H(+) = a 1,2-diacyl-sn-glycero-3-phosphoethanolamine + CO2. Its pathway is phospholipid metabolism; phosphatidylethanolamine biosynthesis; phosphatidylethanolamine from CDP-diacylglycerol: step 2/2. Catalyzes the formation of phosphatidylethanolamine (PtdEtn) from phosphatidylserine (PtdSer). This is Phosphatidylserine decarboxylase proenzyme from Xanthomonas oryzae pv. oryzae (strain MAFF 311018).